The following is a 158-amino-acid chain: GTP-dependent dephospho-CoA kinase (158 aa).

Asp-35, Val-36, Asp-54, Lys-56, Glu-109, and Asp-132 together coordinate GTP.

This sequence belongs to the GTP-dependent DPCK family.

It catalyses the reaction 3'-dephospho-CoA + GTP = GDP + CoA + H(+). It functions in the pathway cofactor biosynthesis; coenzyme A biosynthesis. Its function is as follows. Catalyzes the GTP-dependent phosphorylation of the 3'-hydroxyl group of dephosphocoenzyme A to form coenzyme A (CoA). This is GTP-dependent dephospho-CoA kinase from Methanococcus maripaludis (strain C5 / ATCC BAA-1333).